The primary structure comprises 76 residues: Omega-conotoxin-like TeAr94 (76 aa).

The N-terminal stretch at 1 to 22 (MKLTCMMIVAVLFLTAWTFVTA) is a signal peptide. Positions 23–50 (VPHSSNALENLYLKAHHEMNNPEDSELN) are excised as a propeptide. Intrachain disulfides connect Cys53–Cys67, Cys60–Cys71, and Cys66–Cys75.

Belongs to the conotoxin O1 superfamily. Expressed by the venom duct.

It is found in the secreted. Omega-conotoxins act at presynaptic membranes, they bind and block voltage-gated calcium channels. This is Omega-conotoxin-like TeAr94 from Conus textile (Cloth-of-gold cone).